Consider the following 180-residue polypeptide: uncharacterized protein (180 aa).

The region spanning 35–163 (LRHRATYIVV…TPDSLKALAL (129 aa)) is the Nudix hydrolase domain. The short motif at 72-94 (GGVVQADEQLLESARREAEEELG) is the Nudix box element. Residues Glu-88 and Glu-92 each contribute to the Mg(2+) site.

The protein belongs to the Nudix hydrolase family. Mg(2+) is required as a cofactor.

This is an uncharacterized protein from Escherichia coli O157:H7.